Here is a 382-residue protein sequence, read N- to C-terminus: Chaperone protein DnaJ (382 aa).

The J domain occupies 5–70 (DYYDLLGLSK…DKRAAYDRYG (66 aa)). Residues 138–216 (GTKVPINYVT…CSGSGRVRDE (79 aa)) form a CR-type zinc finger. Zn(2+)-binding residues include C151, C154, C168, C171, C190, C193, C204, and C207. CXXCXGXG motif repeat units follow at residues 151–158 (CSSCSGSG), 168–175 (CNTCHGAG), 190–197 (CHVCNGEG), and 204–211 (CKKCSGSG).

The protein belongs to the DnaJ family. Homodimer. Zn(2+) serves as cofactor.

It localises to the cytoplasm. Functionally, participates actively in the response to hyperosmotic and heat shock by preventing the aggregation of stress-denatured proteins and by disaggregating proteins, also in an autonomous, DnaK-independent fashion. Unfolded proteins bind initially to DnaJ; upon interaction with the DnaJ-bound protein, DnaK hydrolyzes its bound ATP, resulting in the formation of a stable complex. GrpE releases ADP from DnaK; ATP binding to DnaK triggers the release of the substrate protein, thus completing the reaction cycle. Several rounds of ATP-dependent interactions between DnaJ, DnaK and GrpE are required for fully efficient folding. Also involved, together with DnaK and GrpE, in the DNA replication of plasmids through activation of initiation proteins. The chain is Chaperone protein DnaJ from Ehrlichia ruminantium (strain Welgevonden).